The sequence spans 464 residues: UPF0210 protein MA_1691 (464 aa).

This sequence belongs to the UPF0210 family.

This chain is UPF0210 protein MA_1691, found in Methanosarcina acetivorans (strain ATCC 35395 / DSM 2834 / JCM 12185 / C2A).